The primary structure comprises 479 residues: Ribosomal RNA small subunit methyltransferase F (479 aa).

Residues 125–131 (AAAPGSK), Glu-149, Asp-176, and Asp-194 contribute to the S-adenosyl-L-methionine site. Cys-247 acts as the Nucleophile in catalysis.

It belongs to the class I-like SAM-binding methyltransferase superfamily. RsmB/NOP family.

The protein localises to the cytoplasm. It catalyses the reaction cytidine(1407) in 16S rRNA + S-adenosyl-L-methionine = 5-methylcytidine(1407) in 16S rRNA + S-adenosyl-L-homocysteine + H(+). In terms of biological role, specifically methylates the cytosine at position 1407 (m5C1407) of 16S rRNA. The protein is Ribosomal RNA small subunit methyltransferase F of Escherichia coli O127:H6 (strain E2348/69 / EPEC).